We begin with the raw amino-acid sequence, 97 residues long: Small ribosomal subunit protein bS20 (97 aa).

Belongs to the bacterial ribosomal protein bS20 family.

Binds directly to 16S ribosomal RNA. The polypeptide is Small ribosomal subunit protein bS20 (Prochlorococcus marinus (strain MIT 9215)).